The following is a 368-amino-acid chain: Protein RecA (368 aa).

Residue 72 to 79 coordinates ATP; sequence GNESSGKT.

This sequence belongs to the RecA family.

Its subcellular location is the cytoplasm. Functionally, can catalyze the hydrolysis of ATP in the presence of single-stranded DNA, the ATP-dependent uptake of single-stranded DNA by duplex DNA, and the ATP-dependent hybridization of homologous single-stranded DNAs. It interacts with LexA causing its activation and leading to its autocatalytic cleavage. The chain is Protein RecA from Petrotoga mobilis (strain DSM 10674 / SJ95).